Here is a 359-residue protein sequence, read N- to C-terminus: Alanine racemase, biosynthetic (359 aa).

Catalysis depends on Lys34, which acts as the Proton acceptor; specific for D-alanine. Lys34 carries the post-translational modification N6-(pyridoxal phosphate)lysine. Arg129 serves as a coordination point for substrate. The Proton acceptor; specific for L-alanine role is filled by Tyr255. Residue Met303 participates in substrate binding.

Belongs to the alanine racemase family. In terms of assembly, monomer but homodimer in the presence of the substrate. Pyridoxal 5'-phosphate serves as cofactor.

It catalyses the reaction L-alanine = D-alanine. The protein operates within amino-acid biosynthesis; D-alanine biosynthesis; D-alanine from L-alanine: step 1/1. It participates in cell wall biogenesis; peptidoglycan biosynthesis. In terms of biological role, catalyzes the interconversion of L-alanine and D-alanine. This Shigella sonnei protein is Alanine racemase, biosynthetic (alr).